Consider the following 326-residue polypeptide: Putative HTH-type transcriptional regulatory protein MMP0678 (326 aa).

Positions 128–183 constitute an HTH cro/C1-type domain; it reads LRETREKLKISVGELAEVSRVSRKTIYKYEQNEANPSAEVAIKIEEYLDVPLIKGI. A DNA-binding region (H-T-H motif) is located at residues 139–158; the sequence is VGELAEVSRVSRKTIYKYEQ.

This chain is Putative HTH-type transcriptional regulatory protein MMP0678, found in Methanococcus maripaludis (strain DSM 14266 / JCM 13030 / NBRC 101832 / S2 / LL).